The chain runs to 741 residues: MEHTYQYAWIIPFVPLPVTMSIGLGLLLVPTATKNLRRMWAFPSVSLLSIVMVFSADLSIQQINGSSIYQYLCSWTINNDFSLEFGHLIDPLTSIMSILITTVGIMVLIYSDNYMSHDQGYLRFFAYMSFSNTSMLGLVTSSNLIQIHIFWELVGMCSYLLIGFWFTRPIAANACQKAFVTNRVGDFGLLLGILGFYWITGSLEFRDLFEIFNNLIHTNGVNSLFATLCAFLLFVGAVAKSAQFPLHVWLPDAMEGPTPISALIHAATMVAAGIFLVARLLPIFTVIPYIMNLISLLGIITVLLGATLALAQKDIKRSLAYSTMSQLGYTMLAPGIGSYRAALFHLITHAYSKALLFLGSGSIIHSMEPIVGYSPDKSQNMVLMGGLTKYVPITKTTFLLGTLSLCGIPPLACFWSKDEILNDSWLYSPIFAIIACSTAGLTAFYMFRMYLLTFEGHLHIRFQNYSGTKNSSFCSISIWGKEGPEPVKKKLLLSVMNNNQKVSFFSKKIYQIDGNVRNLMRSFSTHFDNKDTSMYPCESDNTMLFPLLVLVLFTLFVGSIGIPFDQVGSDFDILSKWLTPSINLLHQNSNYSVDWYEFVTNAIYSVSISYFGIFIASLLYGSVYSSFQNLDLINSFVKIGPKRLFLDRIINVIYNWSYNRGYIDVFYATFLTKGIRGLAELTNFFDRRVIDGITNGVGIASFFVGEGIKYVGGGRISSYLFVYLSYVSTFLLIYYFYFLNR.

The next 14 helical transmembrane spans lie at 9 to 29, 40 to 60, 89 to 109, 122 to 139, 147 to 167, 185 to 205, 219 to 239, 258 to 278, 280 to 300, 396 to 416, 425 to 445, 544 to 564, 603 to 623, and 719 to 739; these read WIIP…LLLV, WAFP…DLSI, IDPL…MVLI, LRFF…LGLV, IHIF…FWFT, GDFG…SLEF, NGVN…GAVA, TPIS…FLVA, LLPI…LGII, TTFL…CFWS, WLYS…TAFY, LFPL…GIPF, IYSV…YGSV, and YLFV…FYFL.

The protein belongs to the complex I subunit 5 family. In terms of assembly, NDH is composed of at least 16 different subunits, 5 of which are encoded in the nucleus.

The protein resides in the plastid. Its subcellular location is the chloroplast thylakoid membrane. It catalyses the reaction a plastoquinone + NADH + (n+1) H(+)(in) = a plastoquinol + NAD(+) + n H(+)(out). The enzyme catalyses a plastoquinone + NADPH + (n+1) H(+)(in) = a plastoquinol + NADP(+) + n H(+)(out). NDH shuttles electrons from NAD(P)H:plastoquinone, via FMN and iron-sulfur (Fe-S) centers, to quinones in the photosynthetic chain and possibly in a chloroplast respiratory chain. The immediate electron acceptor for the enzyme in this species is believed to be plastoquinone. Couples the redox reaction to proton translocation, and thus conserves the redox energy in a proton gradient. This chain is NAD(P)H-quinone oxidoreductase subunit 5, chloroplastic (ndhF), found in Liriodendron tulipifera (Tuliptree).